Here is a 103-residue protein sequence, read N- to C-terminus: Large ribosomal subunit protein bL21 (103 aa).

This sequence belongs to the bacterial ribosomal protein bL21 family. In terms of assembly, part of the 50S ribosomal subunit. Contacts protein L20.

Its function is as follows. This protein binds to 23S rRNA in the presence of protein L20. In Lactobacillus acidophilus (strain ATCC 700396 / NCK56 / N2 / NCFM), this protein is Large ribosomal subunit protein bL21.